Here is a 609-residue protein sequence, read N- to C-terminus: PTS system beta-glucoside-specific EIIBCA component (609 aa).

Positions 1-86 (MDYDKLSKDI…VRHSNLSDEK (86 aa)) constitute a PTS EIIB type-1 domain. Cys-26 (phosphocysteine intermediate; for EIIB activity) is an active-site residue. The PTS EIIC type-1 domain occupies 103 to 459 (DVISGVFTPI…GSQQPAVHEG (357 aa)). The next 10 membrane-spanning stretches (helical) occupy residues 112–132 (ILPA…AVTF), 141–161 (VHVI…LLLA), 174–194 (VAAA…LGAG), 202–222 (LPVT…SIWI), 246–266 (FTLL…GAIL), 281–301 (AGLV…MTGM), 321–341 (LLPA…AVFL), 351–371 (LALT…MYGV), 379–399 (FAAA…TGVA), and 412–432 (IPVF…IAFA). A PTS EIIA type-1 domain is found at 480 to 584 (DGVFSAGVMG…DVITPVIVTN (105 aa)). His-532 (tele-phosphohistidine intermediate; for EIIA activity) is an active-site residue.

Its subcellular location is the cell membrane. Its function is as follows. The phosphoenolpyruvate-dependent sugar phosphotransferase system (sugar PTS), a major carbohydrate active -transport system, catalyzes the phosphorylation of incoming sugar substrates concomitantly with their translocation across the cell membrane. This system is involved in beta-glucoside transport. The chain is PTS system beta-glucoside-specific EIIBCA component (bglP) from Bacillus subtilis (strain 168).